Consider the following 163-residue polypeptide: Cyanate hydratase (163 aa).

Residues Arg-103, Glu-106, and Ser-129 contribute to the active site.

This sequence belongs to the cyanase family.

The catalysed reaction is cyanate + hydrogencarbonate + 3 H(+) = NH4(+) + 2 CO2. Catalyzes the reaction of cyanate with bicarbonate to produce ammonia and carbon dioxide. This Talaromyces stipitatus (strain ATCC 10500 / CBS 375.48 / QM 6759 / NRRL 1006) (Penicillium stipitatum) protein is Cyanate hydratase.